Here is a 193-residue protein sequence, read N- to C-terminus: 3-isopropylmalate dehydratase small subunit (193 aa).

The protein belongs to the LeuD family. LeuD type 1 subfamily. As to quaternary structure, heterodimer of LeuC and LeuD.

It carries out the reaction (2R,3S)-3-isopropylmalate = (2S)-2-isopropylmalate. It participates in amino-acid biosynthesis; L-leucine biosynthesis; L-leucine from 3-methyl-2-oxobutanoate: step 2/4. Functionally, catalyzes the isomerization between 2-isopropylmalate and 3-isopropylmalate, via the formation of 2-isopropylmaleate. This Bacillus anthracis (strain CDC 684 / NRRL 3495) protein is 3-isopropylmalate dehydratase small subunit.